The following is a 377-amino-acid chain: 23S rRNA (uracil(747)-C(5))-methyltransferase RlmC (377 aa).

Residues Cys3, Cys11, Cys14, and Cys87 each coordinate [4Fe-4S] cluster. S-adenosyl-L-methionine-binding residues include Gln212, Phe241, Glu262, and Asn307. Cys334 acts as the Nucleophile in catalysis.

Belongs to the class I-like SAM-binding methyltransferase superfamily. RNA M5U methyltransferase family. RlmC subfamily.

It carries out the reaction uridine(747) in 23S rRNA + S-adenosyl-L-methionine = 5-methyluridine(747) in 23S rRNA + S-adenosyl-L-homocysteine + H(+). Catalyzes the formation of 5-methyl-uridine at position 747 (m5U747) in 23S rRNA. The chain is 23S rRNA (uracil(747)-C(5))-methyltransferase RlmC from Xenorhabdus bovienii (strain SS-2004) (Xenorhabdus nematophila subsp. bovienii).